The chain runs to 320 residues: ATP-dependent 6-phosphofructokinase isozyme 1 (320 aa).

Residue G12 coordinates ATP. Residues 22 to 26 (RGVVR) and 55 to 60 (RYSVSD) contribute to the ADP site. Residues 73–74 (RF) and 103–106 (GDGS) contribute to the ATP site. Mg(2+) is bound at residue D104. Residue 126–128 (TID) coordinates substrate. Residue D128 is the Proton acceptor of the active site. R155 serves as a coordination point for ADP. Residues R163 and 170-172 (MGR) each bind substrate. ADP-binding positions include 186–188 (GCE), K212, and 214–216 (KKH). Substrate-binding positions include E223, R244, and 250 to 253 (HIQR).

This sequence belongs to the phosphofructokinase type A (PFKA) family. ATP-dependent PFK group I subfamily. Prokaryotic clade 'B1' sub-subfamily. In terms of assembly, homotetramer. The cofactor is Mg(2+).

Its subcellular location is the cytoplasm. The enzyme catalyses beta-D-fructose 6-phosphate + ATP = beta-D-fructose 1,6-bisphosphate + ADP + H(+). Its pathway is carbohydrate degradation; glycolysis; D-glyceraldehyde 3-phosphate and glycerone phosphate from D-glucose: step 3/4. With respect to regulation, allosterically activated by ADP and other diphosphonucleosides, and allosterically inhibited by phosphoenolpyruvate. In terms of biological role, catalyzes the phosphorylation of D-fructose 6-phosphate to fructose 1,6-bisphosphate by ATP, the first committing step of glycolysis. The protein is ATP-dependent 6-phosphofructokinase isozyme 1 of Escherichia coli O6:H1 (strain CFT073 / ATCC 700928 / UPEC).